The following is a 650-amino-acid chain: Aminopeptidase B (650 aa).

Ser7 is subject to Phosphoserine. A substrate-binding site is contributed by 298 to 302; sequence GGMEN. Residue His325 participates in Zn(2+) binding. The Proton acceptor role is filled by Glu326. 2 residues coordinate Zn(2+): His329 and Glu348. At Lys446 the chain carries N6-acetyllysine.

Belongs to the peptidase M1 family. As to quaternary structure, monomer. Zn(2+) is required as a cofactor. Widely expressed.

Its subcellular location is the secreted. It carries out the reaction Release of N-terminal Arg and Lys from oligopeptides when P1' is not Pro. Also acts on arylamides of Arg and Lys.. Exopeptidase which selectively removes arginine and/or lysine residues from the N-terminus of several peptide substrates including Arg(0)-Leu-enkephalin, Arg(0)-Met-enkephalin and Arg(-1)-Lys(0)-somatostatin-14. Can hydrolyze leukotriene A4 (LTA-4) into leukotriene B4 (LTB-4). The protein is Aminopeptidase B (Rnpep) of Rattus norvegicus (Rat).